Here is a 312-residue protein sequence, read N- to C-terminus: Ribosomal protein L11 methyltransferase (312 aa).

S-adenosyl-L-methionine-binding residues include Thr-164, Gly-185, Asp-207, and Asn-249.

This sequence belongs to the methyltransferase superfamily. PrmA family.

It is found in the cytoplasm. The enzyme catalyses L-lysyl-[protein] + 3 S-adenosyl-L-methionine = N(6),N(6),N(6)-trimethyl-L-lysyl-[protein] + 3 S-adenosyl-L-homocysteine + 3 H(+). Functionally, methylates ribosomal protein L11. This is Ribosomal protein L11 methyltransferase from Clostridium novyi (strain NT).